An 823-amino-acid polypeptide reads, in one-letter code: Bifunctional enzyme flvA (823 aa).

A pyridoxal 5'-phosphate-dependent lyase region spans residues 56–535 (TAKFEMALMP…QRLYDAKFYI (480 aa)). Lys-331 carries the N6-(pyridoxal phosphate)lysine modification. Positions 573-823 (DFDALQQVSH…TLPMNVPLWL (251 aa)) are alpha-ketoglutarate-dependent oxygenase. The Fe cation site is built by His-703 and Asp-705.

This sequence in the N-terminal section; belongs to the trans-sulfuration enzymes family. The protein in the C-terminal section; belongs to the iron/ascorbate-dependent oxidoreductase family. Requires pyridoxal 5'-phosphate as cofactor. Fe(2+) serves as cofactor.

It carries out the reaction O-acetyl-L-homoserine + 3-methyl-2-oxobutanoate = (6S)-6-amino-3,3-dimethyl-2-oxoheptanedioate + acetate + H(+). It catalyses the reaction (6S)-3,3-dimethylpiperidine-2,6-dicarboxylate + 2-oxoglutarate + AH2 + O2 + H(+) = (2S)-5,5-dimethylpiperidine-2-carboxylate + succinate + A + 2 CO2 + H2O. The protein operates within secondary metabolite biosynthesis; terpenoid biosynthesis. Bifunctional enzyme; part of the gene cluster that mediates the biosynthesis of flavunoidine, an alkaloidal terpenoid with a tetracyclic cage-like core connected to dimethylcadaverine via a C-N bond and acylated with 5,5-dimethyl-L-pipecolate. The tetracyclic core is synthesized by the terpene cyclase flvE and the cytochrome P450 monooxygenase flvD. The terpene cyclase flvE catalyzes the cyclization of farnesyl pyrophosphate (FPP) to form (1R,4R,5S)-(+)-acoradiene and the cytochrome P450 monooxygenase flvD is then responsible for oxidative conversion of (1R,4R,5S)-(+)-acoradiene into the tetracyclic cage present in the final product flavunoidine. In parallel, the N-methyltransferase flvH dimethylates L-lysine to give N,N-dimethyl-L-Lysin which is decarboxylated by flvG to afford dimethylcadaverine. The terpene cyclase-like protein flvF is the enzyme that attaches the dimethylcadaverine precusor at the C-7 of the tetracyclic cage to yield pre-flavunoidine. The cytochrome monooxygenase flvC hydroxylates the C-10 position of pre-flavunoidine whereas the NRPS flvI acylates the terpenoid core at the hydroxylated C-10 with dimethylpipecolate to yield final flavunoidine. The bifunctional enzyme flvA and the dehydrogenase flvB are responsible for the synthesis of the dimethylpipecolate precursor. The PLP-dependent lyase domain of flvA might use L-O-acetyl-homoserine and alpha-keto-isovalerate to form an intermediary ketone that can cyclize intramolecularly to yield an imine. The imine can be reduced by flvB to yield the 6-carboxylated pipecolate. The C-terminal alpha-KG-dependent oxygenase domain of flvA is then proposed to catalyze the decarboxylation to yield dimethylpipecolate. In Aspergillus flavus (strain ATCC 200026 / FGSC A1120 / IAM 13836 / NRRL 3357 / JCM 12722 / SRRC 167), this protein is Bifunctional enzyme flvA.